A 267-amino-acid polypeptide reads, in one-letter code: Orotidine 5'-phosphate decarboxylase (267 aa).

Substrate is bound by residues aspartate 37, 59-61, 91-100, tyrosine 217, and arginine 235; these read KTH and DRKFADIGNT. Lysine 93 serves as the catalytic Proton donor.

It belongs to the OMP decarboxylase family.

It carries out the reaction orotidine 5'-phosphate + H(+) = UMP + CO2. Its pathway is pyrimidine metabolism; UMP biosynthesis via de novo pathway; UMP from orotate: step 2/2. The protein is Orotidine 5'-phosphate decarboxylase (URA3) of Kluyveromyces marxianus (Yeast).